Reading from the N-terminus, the 92-residue chain is Small ribosomal subunit protein uS19 (92 aa).

It belongs to the universal ribosomal protein uS19 family.

Protein S19 forms a complex with S13 that binds strongly to the 16S ribosomal RNA. The protein is Small ribosomal subunit protein uS19 of Borrelia hermsii (strain HS1 / DAH).